The sequence spans 292 residues: Elongation factor Ts (292 aa).

The involved in Mg(2+) ion dislocation from EF-Tu stretch occupies residues T82–V85.

This sequence belongs to the EF-Ts family.

The protein resides in the cytoplasm. Its function is as follows. Associates with the EF-Tu.GDP complex and induces the exchange of GDP to GTP. It remains bound to the aminoacyl-tRNA.EF-Tu.GTP complex up to the GTP hydrolysis stage on the ribosome. The chain is Elongation factor Ts from Bordetella bronchiseptica (strain ATCC BAA-588 / NCTC 13252 / RB50) (Alcaligenes bronchisepticus).